The primary structure comprises 226 residues: uncharacterized protein (226 aa).

The 112-residue stretch at Met-1 to Ile-112 folds into the Response regulatory domain. Residue Asp-48 is modified to 4-aspartylphosphate. The ompR/PhoB-type DNA-binding region spans Asn-126–Glu-225.

In terms of processing, phosphorylated by YcbM.

The protein localises to the cytoplasm. Its function is as follows. Member of the two-component regulatory system YcbM/YcbL. This is an uncharacterized protein from Bacillus subtilis (strain 168).